Consider the following 201-residue polypeptide: Natural cytotoxicity triggering receptor 3 (201 aa).

The first 18 residues, 1-18 (MAWMLLLILIMVHPGSCA), serve as a signal peptide directing secretion. Residues 19-126 (LWVSQPPEIR…VGTGNGTRLV (108 aa)) enclose the Ig-like domain. The Extracellular segment spans residues 19–135 (LWVSQPPEIR…VVEKEHPQLG (117 aa)). A disulfide bridge links Cys-39 with Cys-108. Residues Asn-42 and Asn-121 are each glycosylated (N-linked (GlcNAc...) asparagine). A helical membrane pass occupies residues 136–156 (AGTVLLLRAGFYAVSFLSVAV). Over 157–201 (GSTVYYQGKCLTWKGPRRQLPAVVPAPLPPPCGSSAHLLPPVPGG) the chain is Cytoplasmic.

This sequence belongs to the natural cytotoxicity receptor (NCR) family. In terms of assembly, homodimer in the unliganted form. Interacts with CD3Z. Interacts with and is activated by binding to NCR3LG1. Interacts with and is activated by binding to BAG6. Interacts with and is inhibited by binding to LGALS3. As to expression, selectively expressed by all resting and activated NK cells and weakly expressed in spleen.

The protein localises to the cell membrane. Functionally, cell membrane receptor of natural killer/NK cells that is activated by binding of extracellular ligands including BAG6 and NCR3LG1. Stimulates NK cells cytotoxicity toward neighboring cells producing these ligands. It controls, for instance, NK cells cytotoxicity against tumor cells. Engagement of NCR3 by BAG6 also promotes myeloid dendritic cells (DC) maturation, both through killing DCs that did not acquire a mature phenotype, and inducing the release by NK cells of TNFA and IFNG which promote DC maturation. This Homo sapiens (Human) protein is Natural cytotoxicity triggering receptor 3.